The chain runs to 93 residues: Cell division topological specificity factor (93 aa).

This sequence belongs to the MinE family.

Prevents the cell division inhibition by proteins MinC and MinD at internal division sites while permitting inhibition at polar sites. This ensures cell division at the proper site by restricting the formation of a division septum at the midpoint of the long axis of the cell. The protein is Cell division topological specificity factor of Alkaliphilus oremlandii (strain OhILAs) (Clostridium oremlandii (strain OhILAs)).